Here is a 92-residue protein sequence, read N- to C-terminus: Toxin RelE3 (92 aa).

Belongs to the RelE toxin family.

In terms of biological role, toxic component of a type II toxin-antitoxin (TA) system. Its toxic effect is neutralized by coexpression with cognate antitoxin RelB3 but no other ParD or RelB antitoxin. The polypeptide is Toxin RelE3 (relE3) (Caulobacter vibrioides (strain ATCC 19089 / CIP 103742 / CB 15) (Caulobacter crescentus)).